The chain runs to 147 residues: Large ribosomal subunit protein uL15 (147 aa).

The tract at residues 1–42 is disordered; that stretch reads MTIKVHHLRPAPGAKTTKTRVGRGEGSKGKTAGRGTKGSKAR.

Belongs to the universal ribosomal protein uL15 family. As to quaternary structure, part of the 50S ribosomal subunit.

Binds to the 23S rRNA. This chain is Large ribosomal subunit protein uL15, found in Salinispora tropica (strain ATCC BAA-916 / DSM 44818 / JCM 13857 / NBRC 105044 / CNB-440).